Reading from the N-terminus, the 60-residue chain is UPF0434 protein NMA0874 (60 aa).

This sequence belongs to the UPF0434 family.

The polypeptide is UPF0434 protein NMA0874 (Neisseria meningitidis serogroup A / serotype 4A (strain DSM 15465 / Z2491)).